The chain runs to 498 residues: Neoxanthin synthase, chloroplastic (498 aa).

A chloroplast-targeting transit peptide spans 1-33; the sequence is METLLKPLTSLLLSSPTPHRSIFQQNPPSLNPT. Residues 16 to 38 are disordered; it reads PTPHRSIFQQNPPSLNPTTKKKS. The segment covering 22-33 has biased composition (polar residues); the sequence is IFQQNPPSLNPT. 84–112 is a binding site for NAD(+); that stretch reads VIIIGAGPAGLRLAEHVSKYGIKVCCVDP.

It belongs to the lycopene cyclase family.

The protein localises to the plastid. It localises to the chloroplast. It catalyses the reaction all-trans-violaxanthin = all-trans-neoxanthin. Its pathway is carotenoid biosynthesis; neoxanthin biosynthesis. Involved in the synthesis of neoxanthin, the last product of carotenoid synthesis and a precursor of abscisic acid. The chain is Neoxanthin synthase, chloroplastic (NXS) from Solanum tuberosum (Potato).